The sequence spans 117 residues: MVSEAEFMAALAKFAETSATASAAADRVIAVANVDASRIADEFNALLGWAMKIATLLLEEISKNPSLKAEMAESHQMLFGNLGTIVPALLKFGPYINQILGNFGLSLGKLFGIVLAF.

A signal peptide spans 1–23 (MVSEAEFMAALAKFAETSATASA).

This is an uncharacterized protein from Archaeoglobus fulgidus (strain ATCC 49558 / DSM 4304 / JCM 9628 / NBRC 100126 / VC-16).